We begin with the raw amino-acid sequence, 201 residues long: MVNSHGIRYIRLKQVFNRALDQSISKLQSWDKVSSCFPQYVNSKQGAINVANCQRQLTEFWTELCQREFKEIMEERNVEQKLNELDELILEAKERYTDRDQDEVNKGPAIDELSSKELVECHLYSQRMHAIHEIDERLAKVNEMNDQLAQELKDLETQVEVEKNEIGKMYDEYLGSHTDQPANVLLVQSLNDMVLELKENY.

In terms of assembly, component of the MIND kinetochore complex, which is composed of at least MTW1, NNF1, NSL1 and DSN1.

It is found in the nucleus. The protein resides in the chromosome. The protein localises to the centromere. It localises to the kinetochore. In terms of biological role, acts as an essential component of the kinetochore MIND complex, which is required for the spindle checkpoint and kinetochore integrity. MIND plays a role in establishing a bipolar spindle-kinetochore interaction by joining kinetochore subunits contacting DNA to those contacting microtubules. NNF1 is required for a number of nuclear functions. Cells depleted of NNF11 or containing a temperature-sensitive NNF1 mutation have elongated microtubules and become bi- and multinucleate. They also have a fragmented nucleolus and accumulate poly(A)+ RNA inside the nucleus. This Saccharomyces cerevisiae (strain ATCC 204508 / S288c) (Baker's yeast) protein is Kinetochore-associated protein NNF1 (NNF1).